Here is a 56-residue protein sequence, read N- to C-terminus: Secreted virulence factor CLU5a (56 aa).

The N-terminal stretch at 1–18 (MKVSLTLLATLCASLASA) is a signal peptide.

It belongs to the MC69 virulence factor family. Homodimer; disulfide-linked. Dimerization can possibly extend to multimerisation.

It localises to the secreted. Functionally, secreted protein required for appressorial penetration of intact host epidermal cells and for pathogenicit, but not for subsequent biotrophic and necrotrophic colonization of leaves. In Colletotrichum graminicola (strain M1.001 / M2 / FGSC 10212) (Maize anthracnose fungus), this protein is Secreted virulence factor CLU5a.